Here is a 320-residue protein sequence, read N- to C-terminus: Melanocyte-stimulating hormone receptor (320 aa).

Residues 1-40 are Extracellular-facing; sequence MPVLGPERRLLASLSSAPPAAPRLGLAANQTNQTGPQCLE. Asparagine 32 carries an N-linked (GlcNAc...) asparagine glycan. A helical membrane pass occupies residues 41 to 66; the sequence is VSIPDGLFLSLGLVSLVENVLVVAAI. The Cytoplasmic portion of the chain corresponds to 67-75; the sequence is AKNRNLHSP. A helical transmembrane segment spans residues 76-96; sequence MYYFVCCLAVSDLLVSVSNVL. The Extracellular portion of the chain corresponds to 97–121; that stretch reads ETAVLLLLEAGALAAQAAVVQQLDN. A helical membrane pass occupies residues 122–143; the sequence is VMDVLICGSMVSSLCFLGAIAV. The Cytoplasmic portion of the chain corresponds to 144 to 166; that stretch reads DRYVSIFYALRYHSIVTLPRAGR. Residues 167-186 form a helical membrane-spanning segment; the sequence is AIAAIWAGSVLSSTLFIAYY. The Extracellular segment spans residues 187–194; the sequence is HHTAVLLG. The helical transmembrane segment at 195–214 threads the bilayer; sequence LVSFFVAMLALMAVLYVHML. The Cytoplasmic segment spans residues 215–243; sequence ARACQHGRHIARLHKTQHPTRQGCGLKGA. Residues 244 to 269 traverse the membrane as a helical segment; it reads ATLTILLGVFLLCWAPFFLHLSLVVL. Residues 270–282 are Extracellular-facing; the sequence is CPQHPTCGCVFKN. The helical transmembrane segment at 283–303 threads the bilayer; it reads VNLFLALVICNSIVDPLIYAF. At 304–320 the chain is on the cytoplasmic side; sequence RSQELRKTLQEVLQCSW.

This sequence belongs to the G-protein coupled receptor 1 family. As to quaternary structure, interacts with MGRN1, but does not undergo MGRN1-mediated ubiquitination; this interaction competes with GNAS-binding and thus inhibits agonist-induced cAMP production. Interacts with OPN3; the interaction results in a decrease in MC1R-mediated cAMP signaling and ultimately a decrease in melanin production in melanocytes.

The protein localises to the cell membrane. Its function is as follows. Receptor for MSH (alpha, beta and gamma) and ACTH. The activity of this receptor is mediated by G proteins which activate adenylate cyclase. Mediates melanogenesis, the production of eumelanin (black/brown) and phaeomelanin (red/yellow), via regulation of cAMP signaling in melanocytes. The polypeptide is Melanocyte-stimulating hormone receptor (MC1R) (Sus scrofa (Pig)).